A 726-amino-acid chain; its full sequence is Catalase-peroxidase (726 aa).

The disordered stretch occupies residues 1 to 33 (MSTTDDTHNTLSTGKCPFHQGGHDRSAGAGTAS). The tryptophyl-tyrosyl-methioninium (Trp-Tyr) (with M-252) cross-link spans 105 to 226 (WHGAGTYRSI…LGATEMGLIY (122 aa)). Catalysis depends on His106, which acts as the Proton acceptor. The tryptophyl-tyrosyl-methioninium (Tyr-Met) (with W-105) cross-link spans 226-252 (YVNPEGPDHSGEPLSAAAAIRATFGNM). His267 is a binding site for heme b.

Belongs to the peroxidase family. Peroxidase/catalase subfamily. In terms of assembly, homodimer or homotetramer. Requires heme b as cofactor. In terms of processing, formation of the three residue Trp-Tyr-Met cross-link is important for the catalase, but not the peroxidase activity of the enzyme.

It catalyses the reaction H2O2 + AH2 = A + 2 H2O. It carries out the reaction 2 H2O2 = O2 + 2 H2O. Functionally, bifunctional enzyme with both catalase and broad-spectrum peroxidase activity. This is Catalase-peroxidase from Salmonella schwarzengrund (strain CVM19633).